Reading from the N-terminus, the 500-residue chain is Probable trehalose-phosphate phosphatase 8 (500 aa).

This sequence belongs to the trehalose phosphatase family. It depends on a divalent metal cation as a cofactor.

It carries out the reaction alpha,alpha-trehalose 6-phosphate + H2O = alpha,alpha-trehalose + phosphate. Its pathway is glycan biosynthesis; trehalose biosynthesis. Its function is as follows. Removes the phosphate from trehalose 6-phosphate to produce free trehalose. Trehalose accumulation in plant may improve abiotic stress tolerance. This Oryza sativa subsp. japonica (Rice) protein is Probable trehalose-phosphate phosphatase 8 (TPP8).